A 200-amino-acid chain; its full sequence is NAD(P)H dehydrogenase (quinone) (200 aa).

One can recognise a Flavodoxin-like domain in the interval 4 to 191 (VLVLYYSSYG…DIARYQGKHV (188 aa)). Residues 10–15 (SSYGHV) and 79–81 (TRF) each bind FMN. Tyr-12 contacts NAD(+). Trp-99 is a binding site for substrate. Residues 114 to 120 (STGTQHG) and His-135 contribute to the FMN site.

This sequence belongs to the WrbA family. FMN serves as cofactor.

The enzyme catalyses a quinone + NADH + H(+) = a quinol + NAD(+). It catalyses the reaction a quinone + NADPH + H(+) = a quinol + NADP(+). The polypeptide is NAD(P)H dehydrogenase (quinone) (Burkholderia orbicola (strain MC0-3)).